The primary structure comprises 571 residues: Hsp70-Hsp90 organizing protein 2 (571 aa).

3 TPR repeats span residues 2-35, 37-69, and 70-103; these read ADEA…TPTN, VLFS…KPDW, and GKGY…DPSN. Residues 117–137 form a disordered region; it reads ASRSRASAPNPFGDAFQGPEM. Positions 134-173 constitute an STI1 1 domain; it reads GPEMWSKLTADPSTRGLLKQPDFVNMMKEIQRNPSNLNLY. Ser-168 bears the Phosphoserine mark. Residues 198 to 207 are compositionally biased toward acidic residues; the sequence is DDMEIGEEEM. The segment at 198-245 is disordered; it reads DDMEIGEEEMAVPSRKEPEVEKKRKPEPEPEPEPEFGEEKQKKLKAQK. Basic and acidic residues-rich tracts occupy residues 211–225 and 234–245; these read SRKE…KPEP and GEEKQKKLKAQK. Positions 240-257 match the Bipartite nuclear localization signal motif; it reads KLKAQKEKELGNAAYKKK. TPR repeat units follow at residues 243–276, 278–310, 322–355, 382–415, 417–449, and 450–483; these read AQKE…DDED, SYIT…GREL, TRKG…HRNP, GDEE…NPKD, RAYS…DPTF, and LKGY…DPNN. The region spanning 520-559 is the STI1 2 domain; that stretch reads DPEIQNILTDPVMRQVLSDLQENPAAAQKHMQNPMIMNKI.

As to quaternary structure, co-chaperone that forms a complex with HSP70 and HSP90 and preproteins (e.g. chloroplast preproteins). Phosphorylated. In terms of processing, acetylated.

It is found in the cytoplasm. Its subcellular location is the nucleus. Mediates the association of the molecular chaperones HSP70 and HSP90. Mediates nuclear encoded chloroplast preproteins binding to HSP90 prior to chloroplastic sorting. The chain is Hsp70-Hsp90 organizing protein 2 (HOP2) from Arabidopsis thaliana (Mouse-ear cress).